A 445-amino-acid polypeptide reads, in one-letter code: POU domain, class 3, transcription factor 2 (445 aa).

2 disordered regions span residues 64–173 (ALSH…WRSA) and 203–269 (LGAG…TPTS). Over residues 67–90 (HGGGGGGGGGGGGGGGGGGGGGDG) the composition is skewed to gly residues. 2 stretches are compositionally biased toward low complexity: residues 125–151 (QQQH…QQQQ) and 163–173 (HHPGPGAWRSA). Residues 217 to 226 (LRDAHDEPHH) show a composition bias toward basic and acidic residues. The segment covering 227–237 (ADHHPHPHSHP) has biased composition (basic residues). The segment covering 239-253 (QQPPPPPPPQGPPGH) has biased composition (pro residues). A POU-specific domain is found at 264–338 (EDTPTSDDLE…LLNKWLEEAD (75 aa)). A Phosphoserine modification is found at serine 343. A DNA-binding region (homeobox) is located at residues 356–415 (KRKKRTSIEVSVKGALESHFLKCPKPSAQEITSLADSLQLEKEVVRVWFCNRRQKEKRMT). The segment at 411–445 (EKRMTPPGGTLPGAEDVYGGSRDTPPHHGVQTPVQ) is disordered.

Belongs to the POU transcription factor family. Class-3 subfamily. In terms of assembly, interacts with PQBP1. Interaction with ISL1. In terms of tissue distribution, expressed specifically in the neuroectodermal cell lineage.

It localises to the nucleus. Functionally, transcription factor that plays a key role in neuronal differentiation. Binds preferentially to the recognition sequence which consists of two distinct half-sites, ('GCAT') and ('TAAT'), separated by a non-conserved spacer region of 0, 2, or 3 nucleotides. Acts as a transcriptional activator when binding cooperatively with SOX4, SOX11, or SOX12 to gene promoters. The combination of three transcription factors, ASCL1, POU3F2/BRN2 and MYT1L, is sufficient to reprogram fibroblasts and other somatic cells into induced neuronal (iN) cells in vitro. Acts downstream of ASCL1, accessing chromatin that has been opened by ASCL1, and promotes transcription of neuronal genes. This chain is POU domain, class 3, transcription factor 2 (Pou3f2), found in Mus musculus (Mouse).